Reading from the N-terminus, the 96-residue chain is ATP synthase subunit c (96 aa).

The next 2 helical transmembrane spans lie at 28-50 and 75-95; these read LGAG…NIGA and AVTE…LFVL.

The protein belongs to the ATPase C chain family. As to quaternary structure, F-type ATPases have 2 components, F(1) - the catalytic core - and F(0) - the membrane proton channel. F(1) has five subunits: alpha(3), beta(3), gamma(1), delta(1), epsilon(1). F(0) has three main subunits: a(1), b(2) and c(10-14). The alpha and beta chains form an alternating ring which encloses part of the gamma chain. F(1) is attached to F(0) by a central stalk formed by the gamma and epsilon chains, while a peripheral stalk is formed by the delta and b chains.

It is found in the cell inner membrane. F(1)F(0) ATP synthase produces ATP from ADP in the presence of a proton or sodium gradient. F-type ATPases consist of two structural domains, F(1) containing the extramembraneous catalytic core and F(0) containing the membrane proton channel, linked together by a central stalk and a peripheral stalk. During catalysis, ATP synthesis in the catalytic domain of F(1) is coupled via a rotary mechanism of the central stalk subunits to proton translocation. Functionally, key component of the F(0) channel; it plays a direct role in translocation across the membrane. A homomeric c-ring of between 10-14 subunits forms the central stalk rotor element with the F(1) delta and epsilon subunits. In Petrotoga mobilis (strain DSM 10674 / SJ95), this protein is ATP synthase subunit c.